Here is a 407-residue protein sequence, read N- to C-terminus: Peptidase T (407 aa).

Histidine 78 is a Zn(2+) binding site. Aspartate 80 is a catalytic residue. Aspartate 139 provides a ligand contact to Zn(2+). Residue glutamate 173 is the Proton acceptor of the active site. Residues glutamate 174, aspartate 196, and histidine 378 each contribute to the Zn(2+) site.

This sequence belongs to the peptidase M20B family. It depends on Zn(2+) as a cofactor.

It is found in the cytoplasm. It catalyses the reaction Release of the N-terminal residue from a tripeptide.. Functionally, cleaves the N-terminal amino acid of tripeptides. The protein is Peptidase T of Shewanella halifaxensis (strain HAW-EB4).